The following is a 986-amino-acid chain: Bifunctional glutamine synthetase adenylyltransferase/adenylyl-removing enzyme (986 aa).

The tract at residues 1-482 (MVTTVISNVK…RYGRLFAGEE (482 aa)) is adenylyl removase. Residues 486-986 (SRFGSLVFTG…RAAYEAVVKG (501 aa)) are adenylyl transferase.

This sequence belongs to the GlnE family. Mg(2+) is required as a cofactor.

It carries out the reaction [glutamine synthetase]-O(4)-(5'-adenylyl)-L-tyrosine + phosphate = [glutamine synthetase]-L-tyrosine + ADP. The enzyme catalyses [glutamine synthetase]-L-tyrosine + ATP = [glutamine synthetase]-O(4)-(5'-adenylyl)-L-tyrosine + diphosphate. Involved in the regulation of glutamine synthetase GlnA, a key enzyme in the process to assimilate ammonia. When cellular nitrogen levels are high, the C-terminal adenylyl transferase (AT) inactivates GlnA by covalent transfer of an adenylyl group from ATP to specific tyrosine residue of GlnA, thus reducing its activity. Conversely, when nitrogen levels are low, the N-terminal adenylyl removase (AR) activates GlnA by removing the adenylyl group by phosphorolysis, increasing its activity. The regulatory region of GlnE binds the signal transduction protein PII (GlnB) which indicates the nitrogen status of the cell. The protein is Bifunctional glutamine synthetase adenylyltransferase/adenylyl-removing enzyme of Caulobacter vibrioides (strain ATCC 19089 / CIP 103742 / CB 15) (Caulobacter crescentus).